The chain runs to 197 residues: Imidazoleglycerol-phosphate dehydratase (197 aa).

Belongs to the imidazoleglycerol-phosphate dehydratase family.

The protein resides in the cytoplasm. The catalysed reaction is D-erythro-1-(imidazol-4-yl)glycerol 3-phosphate = 3-(imidazol-4-yl)-2-oxopropyl phosphate + H2O. It participates in amino-acid biosynthesis; L-histidine biosynthesis; L-histidine from 5-phospho-alpha-D-ribose 1-diphosphate: step 6/9. The sequence is that of Imidazoleglycerol-phosphate dehydratase from Bradyrhizobium sp. (strain BTAi1 / ATCC BAA-1182).